A 149-amino-acid polypeptide reads, in one-letter code: MTIADNKKAFFDYFIEERYEAGIVLEGWEVKAIRAGRVQIKEGYVVVRDAEMFLIGAHISPLQSASTHVKPDPVRTRKLLLKADEIKKLIGKVEQRGYTLVPLNLHYTRGRVKCEIGLAKGKKQFDKRETEKQRDWQREKARIMKGGKE.

The tract at residues 123 to 149 is disordered; that stretch reads KQFDKRETEKQRDWQREKARIMKGGKE.

The protein belongs to the SmpB family.

It is found in the cytoplasm. Its function is as follows. Required for rescue of stalled ribosomes mediated by trans-translation. Binds to transfer-messenger RNA (tmRNA), required for stable association of tmRNA with ribosomes. tmRNA and SmpB together mimic tRNA shape, replacing the anticodon stem-loop with SmpB. tmRNA is encoded by the ssrA gene; the 2 termini fold to resemble tRNA(Ala) and it encodes a 'tag peptide', a short internal open reading frame. During trans-translation Ala-aminoacylated tmRNA acts like a tRNA, entering the A-site of stalled ribosomes, displacing the stalled mRNA. The ribosome then switches to translate the ORF on the tmRNA; the nascent peptide is terminated with the 'tag peptide' encoded by the tmRNA and targeted for degradation. The ribosome is freed to recommence translation, which seems to be the essential function of trans-translation. The sequence is that of SsrA-binding protein from Cupriavidus taiwanensis (strain DSM 17343 / BCRC 17206 / CCUG 44338 / CIP 107171 / LMG 19424 / R1) (Ralstonia taiwanensis (strain LMG 19424)).